We begin with the raw amino-acid sequence, 352 residues long: Holliday junction branch migration complex subunit RuvB (352 aa).

Residues 13 to 201 (FSLRKKELRL…FGISQKIEFY (189 aa)) are large ATPase domain (RuvB-L). ATP is bound by residues Arg41, Gly82, Lys85, Thr86, Thr87, 148–150 (EDF), Arg191, Tyr201, and Arg238. Mg(2+) is bound at residue Thr86. The small ATPAse domain (RuvB-S) stretch occupies residues 202–273 (TYDELKQIIV…LIKKALNSYQ (72 aa)). The segment at 276 to 352 (EKGLDSLDRN…KYIDSKNENF (77 aa)) is head domain (RuvB-H). Positions 330 and 335 each coordinate DNA.

The protein belongs to the RuvB family. In terms of assembly, homohexamer. Forms an RuvA(8)-RuvB(12)-Holliday junction (HJ) complex. HJ DNA is sandwiched between 2 RuvA tetramers; dsDNA enters through RuvA and exits via RuvB. An RuvB hexamer assembles on each DNA strand where it exits the tetramer. Each RuvB hexamer is contacted by two RuvA subunits (via domain III) on 2 adjacent RuvB subunits; this complex drives branch migration. In the full resolvosome a probable DNA-RuvA(4)-RuvB(12)-RuvC(2) complex forms which resolves the HJ.

The protein localises to the cytoplasm. The enzyme catalyses ATP + H2O = ADP + phosphate + H(+). Its function is as follows. The RuvA-RuvB-RuvC complex processes Holliday junction (HJ) DNA during genetic recombination and DNA repair, while the RuvA-RuvB complex plays an important role in the rescue of blocked DNA replication forks via replication fork reversal (RFR). RuvA specifically binds to HJ cruciform DNA, conferring on it an open structure. The RuvB hexamer acts as an ATP-dependent pump, pulling dsDNA into and through the RuvAB complex. RuvB forms 2 homohexamers on either side of HJ DNA bound by 1 or 2 RuvA tetramers; 4 subunits per hexamer contact DNA at a time. Coordinated motions by a converter formed by DNA-disengaged RuvB subunits stimulates ATP hydrolysis and nucleotide exchange. Immobilization of the converter enables RuvB to convert the ATP-contained energy into a lever motion, pulling 2 nucleotides of DNA out of the RuvA tetramer per ATP hydrolyzed, thus driving DNA branch migration. The RuvB motors rotate together with the DNA substrate, which together with the progressing nucleotide cycle form the mechanistic basis for DNA recombination by continuous HJ branch migration. Branch migration allows RuvC to scan DNA until it finds its consensus sequence, where it cleaves and resolves cruciform DNA. The polypeptide is Holliday junction branch migration complex subunit RuvB (Prochlorococcus marinus (strain MIT 9215)).